The primary structure comprises 253 residues: 5'-nucleotidase SurE (253 aa).

A divalent metal cation-binding residues include Asp8, Asp9, Ser39, and Asn92.

The protein belongs to the SurE nucleotidase family. It depends on a divalent metal cation as a cofactor.

It is found in the cytoplasm. The catalysed reaction is a ribonucleoside 5'-phosphate + H2O = a ribonucleoside + phosphate. Nucleotidase that shows phosphatase activity on nucleoside 5'-monophosphates. This Burkholderia vietnamiensis (strain G4 / LMG 22486) (Burkholderia cepacia (strain R1808)) protein is 5'-nucleotidase SurE.